The primary structure comprises 172 residues: MEYTGSQYIGEFVDGRMEGDAEYILPTETKYIGEMKDGMFHGQGTLYFPNGSRFDAVWEKGLVVKGTYTFSDGLQYDTENWHYCDSYDRRFYTEICYGLKPAGISQLTNMDPPRKIPPGCYDCGDGFYNPNTRIVKDYNYRFLRNADDDEHEWIVRTCRKGWDETMGPEPKS.

3 MORN repeats span residues Y8–K30, Y31–R53, and F54–Q75.

The protein localises to the cell projection. The protein resides in the cilium. It is found in the flagellum. The chain is MORN repeat-containing protein 5 (MORN5) from Bos taurus (Bovine).